The primary structure comprises 228 residues: MASGCKIGPSILNSDLANLGAKCLQMLDSGADYLHLDVMDGHFVPNITFGHPVVESLRKQLGQDPFFDMHMMVSKPEQWVKPMAVAEANQYTFHLEATENPGTLIKDIRENGMKVGLAIKPGTSVEYLAPWANQIDMALVMTVEPGFGEQKFMEDMMPKVHWLRTQFPSLDIEGDGGVGSDTVHKCAEAGANMTVSGSAIMRSEDPRSVINLLRNICSEAAQKRSLDR.

Serine 10 is a binding site for substrate. Histidine 35, aspartate 37, and histidine 70 together coordinate a divalent metal cation. Residue aspartate 37 is the Proton acceptor of the active site. Residues histidine 70, 146–149 (GFGE), 175–177 (DGG), and 197–198 (GS) each bind substrate. Position 175 (aspartate 175) interacts with a divalent metal cation. Aspartate 175 serves as the catalytic Proton donor.

Belongs to the ribulose-phosphate 3-epimerase family. In terms of assembly, homodimer. The cofactor is Fe(2+). Mn(2+) serves as cofactor. It depends on Zn(2+) as a cofactor. Requires Co(2+) as cofactor.

It catalyses the reaction D-ribulose 5-phosphate = D-xylulose 5-phosphate. It functions in the pathway carbohydrate degradation. Its function is as follows. Catalyzes the reversible epimerization of D-ribulose 5-phosphate to D-xylulose 5-phosphate. This Homo sapiens (Human) protein is Ribulose-phosphate 3-epimerase-like protein 1 (RPEL1).